Here is a 446-residue protein sequence, read N- to C-terminus: Calcium-binding and coiled-coil domain-containing protein 2 (446 aa).

The CLIR signature appears at 133–136; it reads ILVV. Residues 137 to 349 are a coiled coil; the sequence is TTQGEVEEIE…RENSRLLSYM (213 aa). The short motif at 203-206 is the LIR-like element; that stretch reads DYWE. Positions 371-381 are interaction with LGALS8; that stretch reads NPGLVYGNPYS. Residues 395 to 446 form an interaction with MYO6 region; the sequence is KKCPICKADDICDHILEQQQMQPLCLNCPICDKIFPATEKQIFEDHVFCHSL. Residues 419 to 444 form a UBZ1-type zinc finger; it reads CLNCPICDKIFPATEKQIFEDHVFCH. Zn(2+) is bound by residues Cys-422, Cys-425, His-440, and His-444. Ser-445 bears the Phosphoserine mark.

The protein belongs to the CALCOCO family. In terms of assembly, dimer. Part of a complex consisting of CALCOCO2, TAX1BP1 and MYO6. Interacts with MYO6. Interacts with GEMIN4. Interacts with ATG8 family members MAP1LC3A, MAP1LC3B, GABARAP, GABARAPL1 and GABARAPL2. Interacts with ATG8 family member MAP1LC3C. Interacts with LGALS8. Interacts with TOM1; the interaction is indirect and is mediated by MYO6, which acts as a bridge between TOM1 and CALCOCO2. Interacts with AZI2.

The protein resides in the cytoplasm. It localises to the perinuclear region. Its subcellular location is the cytoskeleton. It is found in the cytoplasmic vesicle. The protein localises to the autophagosome membrane. In terms of biological role, xenophagy-specific receptor required for autophagy-mediated intracellular bacteria degradation. Acts as an effector protein of galectin-sensed membrane damage that restricts the proliferation of infecting pathogens upon entry into the cytosol by targeting LGALS8-associated bacteria for autophagy. Initially orchestrates bacteria targeting to autophagosomes and subsequently ensures pathogen degradation by regulating pathogen-containing autophagosome maturation. Bacteria targeting to autophagosomes relies on its interaction with MAP1LC3A, MAP1LC3B and/or GABARAPL2, whereas regulation of pathogen-containing autophagosome maturation requires the interaction with MAP3LC3C. May play a role in ruffle formation and actin cytoskeleton organization and seems to negatively regulate constitutive secretion. The polypeptide is Calcium-binding and coiled-coil domain-containing protein 2 (Pongo abelii (Sumatran orangutan)).